Here is a 223-residue protein sequence, read N- to C-terminus: Small ribosomal subunit protein uS3 (223 aa).

One can recognise a KH type-2 domain in the interval 39-107; it reads VRSYLAKKLS…PVHINIQEIR (69 aa).

Belongs to the universal ribosomal protein uS3 family. In terms of assembly, part of the 30S ribosomal subunit. Forms a tight complex with proteins S10 and S14.

Binds the lower part of the 30S subunit head. Binds mRNA in the 70S ribosome, positioning it for translation. This chain is Small ribosomal subunit protein uS3, found in Nitrosococcus oceani (strain ATCC 19707 / BCRC 17464 / JCM 30415 / NCIMB 11848 / C-107).